A 347-amino-acid chain; its full sequence is D-alanine--D-alanine ligase (347 aa).

The ATP-grasp domain maps to 138-339 (KILCSHAGIP…YSQVIETILA (202 aa)). 171–226 (SDRFTFPLFVKPVDAGSSFGCTFVDFFEQLPVAIEHALQHGKSAIVEPALDAPEVF) provides a ligand contact to ATP. The Mg(2+) site is built by D296, E308, and N310.

It belongs to the D-alanine--D-alanine ligase family. The cofactor is Mg(2+). Requires Mn(2+) as cofactor.

It is found in the cytoplasm. The enzyme catalyses 2 D-alanine + ATP = D-alanyl-D-alanine + ADP + phosphate + H(+). The protein operates within cell wall biogenesis; peptidoglycan biosynthesis. Its function is as follows. Cell wall formation. This is D-alanine--D-alanine ligase from Tropheryma whipplei (strain TW08/27) (Whipple's bacillus).